We begin with the raw amino-acid sequence, 193 residues long: tRNA (cytidine(56)-2'-O)-methyltransferase (193 aa).

S-adenosyl-L-methionine contacts are provided by residues L86 and 115-119 (GGEKV).

Belongs to the aTrm56 family. Homodimer.

The protein localises to the cytoplasm. The enzyme catalyses cytidine(56) in tRNA + S-adenosyl-L-methionine = 2'-O-methylcytidine(56) in tRNA + S-adenosyl-L-homocysteine + H(+). Functionally, specifically catalyzes the AdoMet-dependent 2'-O-ribose methylation of cytidine at position 56 in tRNAs. This is tRNA (cytidine(56)-2'-O)-methyltransferase from Haloquadratum walsbyi (strain DSM 16790 / HBSQ001).